Here is a 303-residue protein sequence, read N- to C-terminus: tRNA dimethylallyltransferase (303 aa).

13–20 is a binding site for ATP; it reads GPTASGKS. 15–20 contributes to the substrate binding site; that stretch reads TASGKS. Interaction with substrate tRNA stretches follow at residues 38-41 and 162-166; these read DSMQ and QRLLR.

This sequence belongs to the IPP transferase family. In terms of assembly, monomer. It depends on Mg(2+) as a cofactor.

The enzyme catalyses adenosine(37) in tRNA + dimethylallyl diphosphate = N(6)-dimethylallyladenosine(37) in tRNA + diphosphate. Its function is as follows. Catalyzes the transfer of a dimethylallyl group onto the adenine at position 37 in tRNAs that read codons beginning with uridine, leading to the formation of N6-(dimethylallyl)adenosine (i(6)A). The polypeptide is tRNA dimethylallyltransferase (Methylocella silvestris (strain DSM 15510 / CIP 108128 / LMG 27833 / NCIMB 13906 / BL2)).